We begin with the raw amino-acid sequence, 325 residues long: Probable ABC transporter permease YtrD (325 aa).

8 helical membrane passes run 16–36 (VALVITILVFILGNPLSILNM), 63–83 (SSFISLFWIWGVVLAVSQLGI), 113–133 (MVIVVPQLIGYVLSVLLIMLL), 146–166 (LGMIIVSMLAYSLVMAGGALT), 179–199 (VAISPFLLISLPVINLEILFG), 233–253 (YLVIPAIMTIIFYIIGYISFV), 272–292 (PVQIIVIIIGIMGFGYFGFTA), and 298–318 (GYLIGMGTGAVIGFLISYFAI).

Belongs to the ABC-5 integral membrane protein family. The complex is composed of 2 ATP-binding proteins (YtrB and YtrE), 2 transmembrane proteins (YtrC and YtrD) and a solute-binding protein (YtrF).

The protein localises to the cell membrane. Functionally, part of the ABC transporter complex YtrBCDEF that plays a role in acetoin utilization during stationary phase and sporulation. This Bacillus subtilis (strain 168) protein is Probable ABC transporter permease YtrD (ytrD).